The following is a 146-amino-acid chain: Globin (146 aa).

N-acetylalanine is present on Ala1. The Globin domain maps to 1-146 (ALTEPQKTAL…LLTMLIKAHS (146 aa)). Residues His65 and His97 each coordinate heme b.

This sequence belongs to the globin family. Homodimer.

The polypeptide is Globin (Buccinum undatum (Common whelk)).